The primary structure comprises 362 residues: MQIKEIFMIRCISCLSVVLLHIISMVLMLQAEALADISHTVDSFRTLLMFSTPAFIFISEFLLARSYPDGVPDGFLKKRGKVIFVPFLFIAAIDALLMTSAMGGEVTFLAFVQKYLANVFLGNFIGYFILVIFQFYMLHMMFHEYLKKASPKWVLSISFVVTAAYLGYFSAASPAPASEEGGAFPFFWVPFAGWLFYFCLAYYCGKEYKRFLALLNQYRWVVYGAAIASGALVVTVSYVGEIGMISSKRPDIMLYSTSMIFLCFHLFSKMKHVPKIMMFISNYSFSIYLLHAYFMIIGYVLLLNMPEIPAVPAVLLLFAVCTAGPIMTSWALNKFKYGYLFVGKIYQPKQKKVTVEVRDHAG.

10 helical membrane passes run 11–31, 44–64, 82–102, 119–139, 153–173, 181–201, 220–240, 252–267, 283–303, and 308–328; these read CISCLSVVLLHIISMVLMLQA, FRTLLMFSTPAFIFISEFLLA, VIFVPFLFIAAIDALLMTSAM, VFLGNFIGYFILVIFQFYMLH, WVLSISFVVTAAYLGYFSAAS, GGAFPFFWVPFAGWLFYFCLA, WVVYGAAIASGALVVTVSYVG, IMLYSTSMIFLCFHLF, YSFSIYLLHAYFMIIGYVLLL, and IPAVPAVLLLFAVCTAGPIMT.

This sequence belongs to the acyltransferase 3 family.

The protein localises to the cell membrane. This is Putative membrane-bound acyltransferase YfiQ (yfiQ) from Bacillus subtilis (strain 168).